Here is a 316-residue protein sequence, read N- to C-terminus: Ribosomal protein L11 methyltransferase (316 aa).

The S-adenosyl-L-methionine site is built by Thr-163, Gly-184, Asp-206, and Asn-249.

It belongs to the methyltransferase superfamily. PrmA family.

The protein resides in the cytoplasm. The enzyme catalyses L-lysyl-[protein] + 3 S-adenosyl-L-methionine = N(6),N(6),N(6)-trimethyl-L-lysyl-[protein] + 3 S-adenosyl-L-homocysteine + 3 H(+). Its function is as follows. Methylates ribosomal protein L11. The chain is Ribosomal protein L11 methyltransferase from Pediococcus pentosaceus (strain ATCC 25745 / CCUG 21536 / LMG 10740 / 183-1w).